Reading from the N-terminus, the 154-residue chain is SsrA-binding protein (154 aa).

The protein belongs to the SmpB family.

It is found in the cytoplasm. Its function is as follows. Required for rescue of stalled ribosomes mediated by trans-translation. Binds to transfer-messenger RNA (tmRNA), required for stable association of tmRNA with ribosomes. tmRNA and SmpB together mimic tRNA shape, replacing the anticodon stem-loop with SmpB. tmRNA is encoded by the ssrA gene; the 2 termini fold to resemble tRNA(Ala) and it encodes a 'tag peptide', a short internal open reading frame. During trans-translation Ala-aminoacylated tmRNA acts like a tRNA, entering the A-site of stalled ribosomes, displacing the stalled mRNA. The ribosome then switches to translate the ORF on the tmRNA; the nascent peptide is terminated with the 'tag peptide' encoded by the tmRNA and targeted for degradation. The ribosome is freed to recommence translation, which seems to be the essential function of trans-translation. The chain is SsrA-binding protein from Acetivibrio thermocellus (strain ATCC 27405 / DSM 1237 / JCM 9322 / NBRC 103400 / NCIMB 10682 / NRRL B-4536 / VPI 7372) (Clostridium thermocellum).